Consider the following 199-residue polypeptide: Dephospho-CoA kinase (199 aa).

One can recognise a DPCK domain in the interval 3–199 (RIGLTGGIGS…HCKYLQIAQT (197 aa)). Residue 11 to 16 (GSGKST) coordinates ATP.

Belongs to the CoaE family.

It localises to the cytoplasm. It carries out the reaction 3'-dephospho-CoA + ATP = ADP + CoA + H(+). It functions in the pathway cofactor biosynthesis; coenzyme A biosynthesis; CoA from (R)-pantothenate: step 5/5. Functionally, catalyzes the phosphorylation of the 3'-hydroxyl group of dephosphocoenzyme A to form coenzyme A. This chain is Dephospho-CoA kinase, found in Coxiella burnetii (strain RSA 493 / Nine Mile phase I).